Consider the following 300-residue polypeptide: MITDKTECNNPLFGRILTAMVTPFTENGDVDYELAIKLSNYLFENGSDGIVLCGTTGESPTLSWAEQHELFIAVKGSLDASCKVIVGTGSNCTSEAVEATKKAYDSGADGALVVVPYYNKPPQEGLYKHFSSIAKSAKDLPLMLYNIPGRTGCNLLPDTVKKLMDFSNILSIKAASGRIEEVTELRAICGSELSVYSGDDSLLLPMLSVGAVGVVSVASHLVGLQLKEMIYSFQSGKVSNALAIHEKLQPLFKALFMTTNPIPIKAALELSGWDVGNPRSPLSPLTNDMKKQLSFILKSL.

Residue T56 participates in pyruvate binding. Catalysis depends on Y145, which acts as the Proton donor/acceptor. The active-site Schiff-base intermediate with substrate is the K173. Residue V215 coordinates pyruvate.

It belongs to the DapA family. Homotetramer; dimer of dimers.

It localises to the cytoplasm. It catalyses the reaction L-aspartate 4-semialdehyde + pyruvate = (2S,4S)-4-hydroxy-2,3,4,5-tetrahydrodipicolinate + H2O + H(+). It functions in the pathway amino-acid biosynthesis; L-lysine biosynthesis via DAP pathway; (S)-tetrahydrodipicolinate from L-aspartate: step 3/4. Its function is as follows. Catalyzes the condensation of (S)-aspartate-beta-semialdehyde [(S)-ASA] and pyruvate to 4-hydroxy-tetrahydrodipicolinate (HTPA). The polypeptide is 4-hydroxy-tetrahydrodipicolinate synthase (Prochlorococcus marinus (strain MIT 9301)).